The chain runs to 1012 residues: PHD finger protein 20 (1012 aa).

Tudor domains lie at 4–69 (HPPN…RPLE) and 83–147 (GSSE…GNAR). The tract at residues 142 to 336 (IVGNARPKET…RSSRLSTNGT (195 aa)) is disordered. Residues 147-245 (RPKETDHKSL…QVDKKPENDI (99 aa)) show a composition bias toward basic and acidic residues. At serine 159 the chain carries Phosphoserine. A DNA-binding region (a.T hook) is located at residues 257–269 (KRKRGRPPSIAPT). The span at 271–280 (VDSNSQTLQP) shows a compositional bias: polar residues. A compositionally biased stretch (basic and acidic residues) spans 297-325 (PLKRPRLDKNSSQEKSKNYSENTDKDLSR). A C2H2-type zinc finger spans residues 452 to 477 (FRCKVVDCLKFFRKAKLLHYHMKYFH). The span at 481-490 (KSLEPEESPG) shows a compositional bias: basic and acidic residues. A disordered region spans residues 481 to 611 (KSLEPEESPG…KGKVKALEED (131 aa)). The residue at position 488 (serine 488) is a Phosphoserine. Residues 497-509 (RGPSASDKPSQET) are compositionally biased toward polar residues. Residues 522 to 538 (TKDKEKNKEKKFKEFVR) show a composition bias toward basic and acidic residues. Positions 539 to 551 (VKPKKKKKKKKKT) are enriched in basic residues. A PHD-type zinc finger spans residues 654 to 700 (RCICEVQEENDFMIQCEECQCWQHGVCMGLLEENVPEKYTCYVCQDP). Residue lysine 843 is modified to N6-acetyllysine. A disordered region spans residues 866–912 (DAVNPLHENGDDSLSPRLGWPLDQDRSKGDSDPKPGSPKVKEYVSKK). Phosphoserine is present on residues serine 878 and serine 880. Over residues 888–912 (DQDRSKGDSDPKPGSPKVKEYVSKK) the composition is skewed to basic and acidic residues.

As to quaternary structure, homodimer; disulfide-linked. Component of some MLL1/MLL complex, at least composed of the core components KMT2A/MLL1, ASH2L, HCFC1, WDR5 and RBBP5, as well as the facultative components BACC1, CHD8, E2F6, HSP70, INO80C, KANSL1, LAS1L, MAX, MCRS1, MGA, KAT8/MOF, PELP1, PHF20, PRP31, RING2, RUVB1/TIP49A, RUVB2/TIP49B, SENP3, TAF1, TAF4, TAF6, TAF7, TAF9 and TEX10. Component of the NSL complex at least composed of MOF/KAT8, KANSL1, KANSL2, KANSL3, MCRS1, PHF20, OGT1/OGT, WDR5 and HCFC1. Ubiquitinated by TRIM26; leading to proteasomal degradation. Expressed in heart, kidney, liver, lung, pancreas, placenta, spleen and testis. Not expressed in brain, skeletal muscle, colon, ovary, prostate, small intestine and thymus. Expressed in colon and ovary cancer cell lines while it is not expressed in the respective normal tissues.

The protein resides in the nucleus. Methyllysine-binding protein, component of the MOF histone acetyltransferase protein complex. Not required for maintaining the global histone H4 'Lys-16' acetylation (H4K16ac) levels or locus specific histone acetylation, but instead works downstream in transcriptional regulation of MOF target genes. As part of the NSL complex it may be involved in acetylation of nucleosomal histone H4 on several lysine residues. Contributes to methyllysine-dependent p53/TP53 stabilization and up-regulation after DNA damage. The chain is PHD finger protein 20 (PHF20) from Homo sapiens (Human).